The chain runs to 244 residues: ATP synthase subunit O, mitochondrial (244 aa).

The transit peptide at 1-45 (MAMTGRARSMGFSILQKALSSAQRSNAHRSILCPTLSNSELLRNY) directs the protein to the mitochondrion.

Belongs to the ATPase delta chain family. F-type ATPases have 2 components, CF(1) - the catalytic core - and CF(0) - the membrane proton channel. CF(1) has five subunits: alpha(3), beta(3), gamma(1), delta(1), epsilon(1). CF(0) has three main subunits: a, b and c.

It localises to the mitochondrion. Its subcellular location is the mitochondrion inner membrane. In terms of biological role, mitochondrial membrane ATP synthase (F(1)F(0) ATP synthase or Complex V) produces ATP from ADP in the presence of a proton gradient across the membrane which is generated by electron transport complexes of the respiratory chain. F-type ATPases consist of two structural domains, F(1) - containing the extramembraneous catalytic core and F(0) - containing the membrane proton channel, linked together by a central stalk and a peripheral stalk. During catalysis, ATP synthesis in the catalytic domain of F(1) is coupled via a rotary mechanism of the central stalk subunits to proton translocation. Part of the complex F(0) domain and the peripheric stalk, which acts as a stator to hold the catalytic alpha(3)beta(3) subcomplex and subunit a/ATP6 static relative to the rotary elements. This Ipomoea batatas (Sweet potato) protein is ATP synthase subunit O, mitochondrial.